A 372-amino-acid chain; its full sequence is Coxsackievirus and adenovirus receptor homolog (372 aa).

The N-terminal stretch at 1–22 is a signal peptide; sequence MDMRTSFLCVTYVILLTGSACG. 2 Ig-like C2-type domains span residues 23–140 and 130–234; these read LQIT…YLLT and PGIA…VTIT. The Extracellular segment spans residues 23–241; it reads LQITSTGQTS…TITQPPNTAG (219 aa). 3 disulfide bridges follow: Cys-45-Cys-124, Cys-150-Cys-227, and Cys-166-Cys-216. Asn-205 carries N-linked (GlcNAc...) asparagine glycosylation. A helical transmembrane segment spans residues 242 to 262; that stretch reads IIAGVIICILLLLILLALILF. At 263–372 the chain is on the cytoplasmic side; that stretch reads CCCRARHKKK…PAQNKDGSIV (110 aa). Positions 286 to 352 are disordered; sequence PPPKSRVSTA…PPSRMAGPNL (67 aa). A compositionally biased stretch (polar residues) spans 291–317; it reads RVSTARSFTSVGSQRSSLGSMSPSNLH. The span at 318–336 shows a compositional bias: basic and acidic residues; sequence EYSKPQYDKIPSEEYDRPP.

Monomer. Probably homodimer formed by 2 molecules on adjacent cells.

It localises to the cell membrane. The protein resides in the basolateral cell membrane. Its subcellular location is the cell junction. The protein localises to the tight junction. It is found in the adherens junction. Its function is as follows. May function as a homophilic cell adhesion molecule and be essential for tight junction integrity. May also be involved in transepithelial migration of leukocytes through adhesive interactions with jaml. The interaction between both receptors may also mediate the activation of gamma-delta T-cells, a subpopulation of T-cells residing in epithelia and involved in tissue homeostasis and repair. This chain is Coxsackievirus and adenovirus receptor homolog (cxadr), found in Danio rerio (Zebrafish).